The sequence spans 433 residues: MAPAASADHDMDVDMIHDEEDDQGERLINEEYKTWKKNSPFLTALTWPTLTVQWFPDVKEPEGKNYKIHRLLLGTHTSDESPNYLQIADVQIPKVVAPNPDDYDEERGEIGGYGKSGDVAAIKCDIVQRIEHPGEVNKARYQPQNPDILATLCVDGKILIFDRTKHPLDPTSTGKVNAQIELVGHEAEGFGLNWNPHEEGCLASGSEDTTMRLWDLKTLKADSRILNPSRTYRHHTQIVNDVQYHPISKNFIGSVSDDQTLQIVDIRHSETNKAAVVAKRGHLDAINALAFNPNSEVLVATASADKTIGIWDLRNVKEKVHTLEGHNDAVTSLAWHPTEAGILGSASYDRRIIFWDLSRVGEEQLPDDQDDGPPELLFMHGGHTNHLADFSWNPNEPWLVASAAEDNLLQIWKVAESIVGKDDGDLPIDELDR.

WD repeat units lie at residues 131-171, 184-224, 234-274, 281-321, and 325-365; these read EHPG…LDPT, GHEA…ADSR, HHTQ…TNKA, GHLD…EKVH, and GHND…EEQL. An interaction with the histone H4 N-terminus region spans residues 367-371; it reads DDQDD. A WD 6 repeat occupies 382–422; that stretch reads GHTNHLADFSWNPNEPWLVASAAEDNLLQIWKVAESIVGKD.

It belongs to the WD repeat RBAP46/RBAP48/MSI1 family. In terms of assembly, component of the HAT-B complex composed of at least HAT1 and HAT2. The HAT-B complex binds to histone H4 tail.

The protein localises to the cytoplasm. The protein resides in the nucleus. Functionally, regulatory subunit of the histone acetylase B (HAT-B) complex. The complex acetylates 'Lys-12' of histone H4 which is required for telomeric silencing. This is Histone acetyltransferase type B subunit 2 (HAT2) from Gibberella zeae (strain ATCC MYA-4620 / CBS 123657 / FGSC 9075 / NRRL 31084 / PH-1) (Wheat head blight fungus).